Reading from the N-terminus, the 419-residue chain is Glutamate dehydrogenase (419 aa).

K105 is an active-site residue. Position 219–225 (219–225 (GYGNAGY)) interacts with NAD(+).

Belongs to the Glu/Leu/Phe/Val dehydrogenases family. As to quaternary structure, homohexamer.

It is found in the cytoplasm. It carries out the reaction L-glutamate + NAD(+) + H2O = 2-oxoglutarate + NH4(+) + NADH + H(+). The catalysed reaction is L-glutamate + NADP(+) + H2O = 2-oxoglutarate + NH4(+) + NADPH + H(+). The chain is Glutamate dehydrogenase (gdhA) from Thermococcus litoralis (strain ATCC 51850 / DSM 5473 / JCM 8560 / NS-C).